The primary structure comprises 272 residues: Nitrogenase iron protein (272 aa).

8 to 15 is an ATP binding site; it reads GKGGIGKS. Cys-94 provides a ligand contact to [4Fe-4S] cluster. Arg-97 bears the ADP-ribosylarginine; by dinitrogenase reductase ADP-ribosyltransferase mark. Cys-129 contacts [4Fe-4S] cluster.

Belongs to the NifH/BchL/ChlL family. As to quaternary structure, homodimer. The cofactor is [4Fe-4S] cluster. Post-translationally, the reversible ADP-ribosylation of Arg-97 inactivates the nitrogenase reductase and regulates nitrogenase activity.

It carries out the reaction N2 + 8 reduced [2Fe-2S]-[ferredoxin] + 16 ATP + 16 H2O = H2 + 8 oxidized [2Fe-2S]-[ferredoxin] + 2 NH4(+) + 16 ADP + 16 phosphate + 6 H(+). Its function is as follows. The key enzymatic reactions in nitrogen fixation are catalyzed by the nitrogenase complex, which has 2 components: the iron protein and the molybdenum-iron protein. The sequence is that of Nitrogenase iron protein from Desulforamulus reducens (strain ATCC BAA-1160 / DSM 100696 / MI-1) (Desulfotomaculum reducens).